Here is a 450-residue protein sequence, read N- to C-terminus: Flavin-containing monooxygenase FMO GS-OX-like 5 (450 aa).

Residue 17 to 22 participates in FAD binding; that stretch reads GAGPAG. 215–220 lines the NADP(+) pocket; sequence GNSSSA.

It belongs to the FMO family. FAD is required as a cofactor.

In terms of biological role, catalyzes the conversion of methylthioalkyl glucosinolates of any chain length into methylsulfinylalkyl glucosinolates. The chain is Flavin-containing monooxygenase FMO GS-OX-like 5 from Arabidopsis thaliana (Mouse-ear cress).